The following is a 339-amino-acid chain: Glycerol-3-phosphate dehydrogenase [NAD(P)+] (339 aa).

S15, Y16, H36, and K110 together coordinate NADPH. 3 residues coordinate sn-glycerol 3-phosphate: K110, G139, and T141. A143 contacts NADPH. K195, D248, S258, R259, and N260 together coordinate sn-glycerol 3-phosphate. K195 functions as the Proton acceptor in the catalytic mechanism. Residue R259 participates in NADPH binding. The NADPH site is built by V283 and E285.

This sequence belongs to the NAD-dependent glycerol-3-phosphate dehydrogenase family.

The protein resides in the cytoplasm. The catalysed reaction is sn-glycerol 3-phosphate + NAD(+) = dihydroxyacetone phosphate + NADH + H(+). It carries out the reaction sn-glycerol 3-phosphate + NADP(+) = dihydroxyacetone phosphate + NADPH + H(+). It participates in membrane lipid metabolism; glycerophospholipid metabolism. Its function is as follows. Catalyzes the reduction of the glycolytic intermediate dihydroxyacetone phosphate (DHAP) to sn-glycerol 3-phosphate (G3P), the key precursor for phospholipid synthesis. This chain is Glycerol-3-phosphate dehydrogenase [NAD(P)+], found in Erwinia tasmaniensis (strain DSM 17950 / CFBP 7177 / CIP 109463 / NCPPB 4357 / Et1/99).